The primary structure comprises 45 residues: Alpha-conotoxin-like Lp1.10 (45 aa).

The propeptide occupies 1-27; the sequence is VVLGPASDGRNAAANVKAPDLIALTVR. Cystine bridges form between Cys30/Cys36 and Cys31/Cys44. Residues 32 to 34 form a lacks the Ser-Xaa-Pro motif that is crucial for potent interaction with nAChR region; that stretch reads HNA. A Cysteine amide modification is found at Cys44.

This sequence belongs to the conotoxin A superfamily. Expressed by the venom duct.

It localises to the secreted. In terms of biological role, alpha-conotoxins act on postsynaptic membranes, they bind to the nicotinic acetylcholine receptors (nAChR) and thus inhibit them. Has possibly a distinct nAChR binding mode from other alpha-conotoxins, due to a different three residue motif (lacks the Ser-Xaa-Pro motif). This is Alpha-conotoxin-like Lp1.10 from Conus leopardus (Leopard cone).